Here is a 166-residue protein sequence, read N- to C-terminus: MAKTLSKPASGALAPWLGISLIVILFDQLSKIAILKTFAYGAQHALTSFFNLVLVYNRGAAFGFLSTASGWQRWAFTALGVGATLVICFLLKRHGHQRLFSVSLALILGGALGNVIDRLVYGHVIDFLDFHLGAWHFPAFNLADSAITVGAVLLIYDELRRVRGAR.

4 helical membrane passes run 9 to 29 (ASGA…FDQL), 45 to 65 (ALTS…FGFL), 71 to 91 (WQRW…CFLL), and 100 to 120 (FSVS…DRLV). Catalysis depends on residues Asp126 and Asp144. The helical transmembrane segment at 135-155 (WHFPAFNLADSAITVGAVLLI) threads the bilayer.

The protein belongs to the peptidase A8 family.

The protein resides in the cell inner membrane. The catalysed reaction is Release of signal peptides from bacterial membrane prolipoproteins. Hydrolyzes -Xaa-Yaa-Zaa-|-(S,diacylglyceryl)Cys-, in which Xaa is hydrophobic (preferably Leu), and Yaa (Ala or Ser) and Zaa (Gly or Ala) have small, neutral side chains.. It participates in protein modification; lipoprotein biosynthesis (signal peptide cleavage). This protein specifically catalyzes the removal of signal peptides from prolipoproteins. This chain is Lipoprotein signal peptidase, found in Burkholderia cenocepacia (strain HI2424).